A 91-amino-acid chain; its full sequence is Small ribosomal subunit protein uS15 (91 aa).

Belongs to the universal ribosomal protein uS15 family. As to quaternary structure, part of the 30S ribosomal subunit. Forms a bridge to the 50S subunit in the 70S ribosome, contacting the 23S rRNA.

Functionally, one of the primary rRNA binding proteins, it binds directly to 16S rRNA where it helps nucleate assembly of the platform of the 30S subunit by binding and bridging several RNA helices of the 16S rRNA. Its function is as follows. Forms an intersubunit bridge (bridge B4) with the 23S rRNA of the 50S subunit in the ribosome. The chain is Small ribosomal subunit protein uS15 from Rickettsia peacockii (strain Rustic).